We begin with the raw amino-acid sequence, 710 residues long: MLTTLKPFGSVSVESKMNNKAGSFFWNLRQFSTLVSTSRTMRLCCLGLCKPKIVHSNWNILNNFHNRMQSTDIIRYLFQDAFIFKSDVGFQTKGISTLTALRIERLLYAKRLFFDSKQSLVPVDKSDDELKKVNLNHEVSNEDVLTKETKPNRISSRKLSEECNSLSDVLDAFSKAPTFPSSNYFTAMWTIAKRLSDDQKRFEKRLMFSHPAFNQLCEHMMREAKIMQYKYLLFSLHAIVKLGIPQNTILVQTLLRVTQERINECDEICLSVLSTVLEAMEPCKNVHVLRTGFRILVDQQVWKIEDVFTLQVVMKCIGKDAPIALKRKLEMKALRELDRFSVLNSQHMFEVLAAMNHRSLILLDECSKVVLDNIHGCPLRIMINILQSCKDLQYHNLDLFKGLADYVAATFDIWKFRKVLFILILFENLGFRPVGLMDLFMKRIVEDPESLNMKNILSILHTYSSLNHVYKCQNKEQFVEVMASALTGYLHTISSENLLDAVYSFCLMNYFPLAPFNQLLQKDIISELLTSDDMKNAYKLHTLDTCLKLDDTVYLRDIALSLPQLPRELPSSHTNAKVAEVLSSLLGGEGHFSKDVHLPHNYHIDFEIRMDTNRNQVLPLSDVDTTSATDIQRVAVLCVSRSAYCLGSSHPRGFLAMKMRHLNAMGFHVILVNNWEMDKLEMEDAVTFLKTKIYSVEALPVAAVNVQSTQ.

2 positions are modified to phosphoserine: Ser126 and Ser140. Positions 634 to 691 constitute an RAP domain; that stretch reads VAVLCVSRSAYCLGSSHPRGFLAMKMRHLNAMGFHVILVNNWEMDKLEMEDAVTFLKT. Ser708 is subject to Phosphoserine.

The protein belongs to the FAST kinase family. As to quaternary structure, monomer. Found in a complex with GRSF1, DDX28, DHX30 and FASTKD5. Associates with the 16S mitochondrial rRNA (16S mt-rRNA). Forms a regulatory protein-RNA complex, consisting of RCC1L, NGRN, RPUSD3, RPUSD4, TRUB2, FASTKD2 and 16S mt-rRNA. As to expression, expression detected in spleen, thymus, testis, ovary, colon, heart, smooth muscle, kidney, brain, lung, liver and white adipose tissue with highest expression in heart, smooth muscle and thyroid.

The protein localises to the mitochondrion matrix. Its subcellular location is the mitochondrion nucleoid. Its function is as follows. Plays an important role in assembly of the mitochondrial large ribosomal subunit. As a component of a functional protein-RNA module, consisting of RCC1L, NGRN, RPUSD3, RPUSD4, TRUB2, FASTKD2 and 16S mitochondrial ribosomal RNA (16S mt-rRNA), controls 16S mt-rRNA abundance and is required for intra-mitochondrial translation. May play a role in mitochondrial apoptosis. This is FAST kinase domain-containing protein 2, mitochondrial from Homo sapiens (Human).